The chain runs to 228 residues: UPF0758 protein CLD_1541 (228 aa).

The 123-residue stretch at K106 to I228 folds into the MPN domain. Positions 177, 179, and 190 each coordinate Zn(2+). The JAMM motif motif lies at H177–D190.

Belongs to the UPF0758 family.

The chain is UPF0758 protein CLD_1541 from Clostridium botulinum (strain Okra / Type B1).